The sequence spans 371 residues: Chorismate synthase (371 aa).

NADP(+)-binding residues include R48 and R54. FMN is bound by residues R132 to S134, N244 to A245, G289, K304 to S308, and R330.

The protein belongs to the chorismate synthase family. In terms of assembly, homotetramer. FMNH2 serves as cofactor.

It catalyses the reaction 5-O-(1-carboxyvinyl)-3-phosphoshikimate = chorismate + phosphate. The protein operates within metabolic intermediate biosynthesis; chorismate biosynthesis; chorismate from D-erythrose 4-phosphate and phosphoenolpyruvate: step 7/7. Its function is as follows. Catalyzes the anti-1,4-elimination of the C-3 phosphate and the C-6 proR hydrogen from 5-enolpyruvylshikimate-3-phosphate (EPSP) to yield chorismate, which is the branch point compound that serves as the starting substrate for the three terminal pathways of aromatic amino acid biosynthesis. This reaction introduces a second double bond into the aromatic ring system. The polypeptide is Chorismate synthase (Methylobacterium nodulans (strain LMG 21967 / CNCM I-2342 / ORS 2060)).